Consider the following 114-residue polypeptide: Large ribosomal subunit protein uL22c (114 aa).

This sequence belongs to the universal ribosomal protein uL22 family. As to quaternary structure, part of the 50S ribosomal subunit.

It localises to the plastid. Its subcellular location is the cyanelle. Functionally, this protein binds specifically to 23S rRNA. The globular domain of the protein is located near the polypeptide exit tunnel on the outside of the subunit, while an extended beta-hairpin is found that lines the wall of the exit tunnel in the center of the 70S ribosome. In Cyanophora paradoxa, this protein is Large ribosomal subunit protein uL22c (rpl22).